A 194-amino-acid polypeptide reads, in one-letter code: Lysozyme g (194 aa).

Catalysis depends on residues Glu-71 and Asp-84.

This sequence belongs to the glycosyl hydrolase 23 family. In terms of tissue distribution, expressed in intestine, liver, spleen, anterior kidney, posterior kidney, heart, gill, muscle and leukocytes.

The enzyme catalyses Hydrolysis of (1-&gt;4)-beta-linkages between N-acetylmuramic acid and N-acetyl-D-glucosamine residues in a peptidoglycan and between N-acetyl-D-glucosamine residues in chitodextrins.. In terms of biological role, has lytic activity against M.lysodeikticus, V.alginolyticus from Epinephelus fario, V.vulnificus from culture water, A.hydrophila from soft-shell turtle, A.hydrophila from goldfish and V.parahaemolyticus, P.fluorescens and V.fluvialis from culture water. The protein is Lysozyme g of Epinephelus coioides (Orange-spotted grouper).